The sequence spans 376 residues: MAGQIDPIRAELVGWTPRVPRNLLASLPPLGRKTAPKLPQNISFSPPLSAHPCYQCQEKCLPHRRPVSWSPLILQRCRLRCLPRGHPLKISRTFELPVGERDGSHPLTAFARAPRTTEPRSLHYLYDSLPPTPALCAQLLFHQLIQGHFSFVVHPTVATAPRSIWPAKMSRFSTGRLLAQNLFQAFNKPVFPSATPVWTRAFSQTAARRDADSESSAKLMESLTRGIVGMAADPTDLTGDKLATNIGLRDTEDEPYHFHIYSHKHNTHITVTKPNRDALISLSCGNLGFKKSNRKHYDSAYQLGAYVVDKMHQMNLHNKIKKMEVVLRGFGPGREAVIKVLLGNEGRMLRSSIVRVSDATRLKFGGTRSKKPRRLG.

The protein belongs to the universal ribosomal protein uS11 family. Component of the mitochondrial small ribosomal subunit (mt-SSU). Mature N.crassa 74S mitochondrial ribosomes consist of a small (37S) and a large (54S) subunit. The 37S small subunit contains a 16S ribosomal RNA (16S mt-rRNA) and 32 different proteins. The 54S large subunit contains a 23S rRNA (23S mt-rRNA) and 42 different proteins.

It is found in the mitochondrion. Functionally, component of the mitochondrial ribosome (mitoribosome), a dedicated translation machinery responsible for the synthesis of mitochondrial genome-encoded proteins, including at least some of the essential transmembrane subunits of the mitochondrial respiratory chain. The mitoribosomes are attached to the mitochondrial inner membrane and translation products are cotranslationally integrated into the membrane. This chain is Small ribosomal subunit protein uS11m (mrps18), found in Neurospora crassa (strain ATCC 24698 / 74-OR23-1A / CBS 708.71 / DSM 1257 / FGSC 987).